The following is a 332-amino-acid chain: MRTKIAIPMGDPAGVGPEIVVKTAVSKEILDLCDLVVIGDKKVLEKATKICQVDLKIHTIKNIEEGKYEKGILNVIDLENVDMNTLEYGQVQGMCGKAAFEYIKKCVELAMEYKVDAIATTPINKESLRAGNVNYIGHTEILGDLSNSRDPLTMFEVDNMRVFFLTRHMSLRKACDAITKERVLEYIERCTKALKQLGVTGKMAVAGLNPHSGEHGLFGNEEVKEITPAIEEAQKLGYDVVGPIGADSVFHQALQGRYVAVLSLYHDQGHIATKTYDFERTIAITLDMPFLRTSVDHGTAFDIAGKGIVSAISMIEAVKLAAKYAPNFKNIK.

Residues H138 and T139 each coordinate substrate. Positions 168, 211, and 266 each coordinate a divalent metal cation. 2 residues coordinate substrate: K274 and R292.

The protein belongs to the PdxA family. PdxA2 subfamily. As to quaternary structure, homodimer. A divalent metal cation serves as cofactor.

It catalyses the reaction 4-O-phospho-D-threonate + NAD(+) = dihydroxyacetone phosphate + CO2 + NADH. Its function is as follows. Catalyzes the NAD-dependent oxidation and subsequent decarboxylation of D-threonate 4-phosphate to produce dihydroxyacetone phosphate (DHAP). The chain is Putative D-threonate 4-phosphate dehydrogenase from Fusobacterium nucleatum subsp. nucleatum (strain ATCC 25586 / DSM 15643 / BCRC 10681 / CIP 101130 / JCM 8532 / KCTC 2640 / LMG 13131 / VPI 4355).